We begin with the raw amino-acid sequence, 63 residues long: Cecropin-2 (63 aa).

Positions 1-21 (MNFNKVLVLLAVIFAVFAGQT) are cleaved as a signal peptide. A propeptide spanning residues 22 to 23 (EA) is cleaved from the precursor. At lysine 62 the chain carries Lysine amide.

It belongs to the cecropin family.

The protein localises to the secreted. Cecropins have lytic and antibacterial activity against several Gram-positive and Gram-negative bacteria. The polypeptide is Cecropin-2 (CEC2) (Ceratitis capitata (Mediterranean fruit fly)).